A 181-amino-acid chain; its full sequence is Large ribosomal subunit protein uL5 (181 aa).

This sequence belongs to the universal ribosomal protein uL5 family. Part of the 50S ribosomal subunit; part of the 5S rRNA/L5/L18/L25 subcomplex. Contacts the 5S rRNA and the P site tRNA. Forms a bridge to the 30S subunit in the 70S ribosome.

Functionally, this is one of the proteins that bind and probably mediate the attachment of the 5S RNA into the large ribosomal subunit, where it forms part of the central protuberance. In the 70S ribosome it contacts protein S13 of the 30S subunit (bridge B1b), connecting the 2 subunits; this bridge is implicated in subunit movement. Contacts the P site tRNA; the 5S rRNA and some of its associated proteins might help stabilize positioning of ribosome-bound tRNAs. The polypeptide is Large ribosomal subunit protein uL5 (Aster yellows witches'-broom phytoplasma (strain AYWB)).